A 424-amino-acid chain; its full sequence is MTQMEEARKGNITPEMEEVARKENLDIQMLIRGIANGRIVIPSNINRESSPCGIGENLSTKINANIGSSSKMEDIELEVDKALAAVEYGADAVMDLSTGPMLRDVRKAVLEAVDVPVGTVPIYEAGVEAFMSDGAVVDMDEDDMFRAIENQARDGVDFMTVHSGITLETVERAQRSGRIMGIVSRGGAFLAAWIMQNQEENPLYSNYEYLLEVAYEYDVTLSLGDGLRPGCLADASDIPQISELLTLAELVERARDADVQCMVEGPGHMPLDQIAANMKIQKEVCDGAPFYVLGPIVTDMAPGYDHISAAIGGAVAAMNGADFLCYVTPAEHLAIPGVQDVIEGVIASRIAAQAADAARKLPGAWDSELEMADARRSFDWDKQFKLAFDSKKPYEYRMQCPIEDSEMCSMCGEYCALRILREDR.

Residues Asn65, Met94, Tyr123, His162, 184 to 186 (SRG), 225 to 228 (DGLR), and Glu264 each bind substrate. Position 268 (His268) interacts with Zn(2+). Tyr291 contacts substrate. Zn(2+) is bound at residue His332. Positions 408, 411, and 415 each coordinate [4Fe-4S] cluster.

This sequence belongs to the ThiC family. [4Fe-4S] cluster serves as cofactor.

It carries out the reaction 5-amino-1-(5-phospho-beta-D-ribosyl)imidazole + S-adenosyl-L-methionine = 4-amino-2-methyl-5-(phosphooxymethyl)pyrimidine + CO + 5'-deoxyadenosine + formate + L-methionine + 3 H(+). The protein operates within cofactor biosynthesis; thiamine diphosphate biosynthesis. Catalyzes the synthesis of the hydroxymethylpyrimidine phosphate (HMP-P) moiety of thiamine from aminoimidazole ribotide (AIR) in a radical S-adenosyl-L-methionine (SAM)-dependent reaction. In Methanothermobacter thermautotrophicus (strain ATCC 29096 / DSM 1053 / JCM 10044 / NBRC 100330 / Delta H) (Methanobacterium thermoautotrophicum), this protein is Phosphomethylpyrimidine synthase 2.